A 733-amino-acid polypeptide reads, in one-letter code: Photosystem I P700 chlorophyll a apoprotein A2 (733 aa).

8 helical membrane passes run 46 to 69, 134 to 157, 174 to 198, 272 to 290, 329 to 352, 368 to 394, 416 to 438, and 516 to 534; these read IFAS…FHVA, LYLG…LHLQ, LNHH…HVAL, IAHH…GHMY, LHIQ…QHMY, AALY…IFFV, AIIS…LYIH, and FLVH…LILV. Cys558 and Cys567 together coordinate [4Fe-4S] cluster. A run of 2 helical transmembrane segments spans residues 574–595 and 642–664; these read AFYL…YWHW and LSVW…MFLI. Chlorophyll a is bound by residues His653, Met661, and Tyr669. Trp670 contributes to the phylloquinone binding site. The helical transmembrane segment at 706–726 threads the bilayer; it reads LVGLVHFAVGYILTYAAFVIA.

Belongs to the PsaA/PsaB family. The PsaA/B heterodimer binds the P700 chlorophyll special pair and subsequent electron acceptors. PSI consists of a core antenna complex that captures photons, and an electron transfer chain that converts photonic excitation into a charge separation. The eukaryotic PSI reaction center is composed of at least 11 subunits. The cofactor is P700 is a chlorophyll a/chlorophyll a' dimer, A0 is one or more chlorophyll a, A1 is one or both phylloquinones and FX is a shared 4Fe-4S iron-sulfur center..

The protein resides in the plastid. Its subcellular location is the chloroplast thylakoid membrane. The catalysed reaction is reduced [plastocyanin] + hnu + oxidized [2Fe-2S]-[ferredoxin] = oxidized [plastocyanin] + reduced [2Fe-2S]-[ferredoxin]. In terms of biological role, psaA and PsaB bind P700, the primary electron donor of photosystem I (PSI), as well as the electron acceptors A0, A1 and FX. PSI is a plastocyanin/cytochrome c6-ferredoxin oxidoreductase, converting photonic excitation into a charge separation, which transfers an electron from the donor P700 chlorophyll pair to the spectroscopically characterized acceptors A0, A1, FX, FA and FB in turn. Oxidized P700 is reduced on the lumenal side of the thylakoid membrane by plastocyanin or cytochrome c6. This chain is Photosystem I P700 chlorophyll a apoprotein A2, found in Trieres chinensis (Marine centric diatom).